The primary structure comprises 309 residues: tRNA dimethylallyltransferase (309 aa).

10-17 (GPTAVGKT) contacts ATP. 12–17 (TAVGKT) contributes to the substrate binding site. The tract at residues 35–38 (DSMQ) is interaction with substrate tRNA.

Belongs to the IPP transferase family. As to quaternary structure, monomer. The cofactor is Mg(2+).

The enzyme catalyses adenosine(37) in tRNA + dimethylallyl diphosphate = N(6)-dimethylallyladenosine(37) in tRNA + diphosphate. Catalyzes the transfer of a dimethylallyl group onto the adenine at position 37 in tRNAs that read codons beginning with uridine, leading to the formation of N6-(dimethylallyl)adenosine (i(6)A). The protein is tRNA dimethylallyltransferase of Clostridium beijerinckii (strain ATCC 51743 / NCIMB 8052) (Clostridium acetobutylicum).